Here is a 125-residue protein sequence, read N- to C-terminus: Acidic phospholipase A2 6 (125 aa).

Residue Ser-1 is a signal peptide. Residues 2–7 (NRPMPL) constitute a propeptide that is removed on maturation. Disulfide bonds link Cys-18–Cys-77, Cys-33–Cys-124, Cys-35–Cys-50, Cys-49–Cys-105, Cys-56–Cys-98, Cys-66–Cys-91, and Cys-84–Cys-96. Asp-30 lines the Zn(2+) pocket. Residues Tyr-34 and Gly-36 each coordinate Ca(2+). The active site involves His-53. Asp-54 provides a ligand contact to Ca(2+). The active site involves Asp-99.

In terms of assembly, heterodimer formed between isoform 5 and isoform 6 in presence of zinc ion and monomer in absence of zinc ion. Requires Ca(2+) as cofactor. Expressed by the venom gland.

The protein localises to the secreted. It catalyses the reaction a 1,2-diacyl-sn-glycero-3-phosphocholine + H2O = a 1-acyl-sn-glycero-3-phosphocholine + a fatty acid + H(+). In terms of biological role, PLA2 catalyzes the calcium-dependent hydrolysis of the 2-acyl groups in 3-sn-phosphoglycerides. This is Acidic phospholipase A2 6 from Naja sagittifera (Andaman cobra).